The chain runs to 761 residues: Zinc finger protein 287 (761 aa).

The SCAN box domain occupies 49–131 (RQNFRNFPYP…TLVEDLTQIL (83 aa)). The disordered stretch occupies residues 134 to 154 (EAPQNSTLSQDTPEEDPRGKH). The region spanning 170–238 (MTFKDVAVDI…IKEILEGPSP (69 aa)) is the KRAB domain. C2H2-type zinc fingers lie at residues 368–390 (YKCN…QSTH), 396–418 (YECE…QRMH), 424–446 (YECH…QRIH), 452–474 (YKCD…QRTH), 480–502 (YKCL…QRVH), 508–530 (YICN…QKIH), 536–558 (YKCN…QRIH), 564–586 (YKCN…QTTH), 592–614 (YICN…HRTH), 620–642 (YKCS…QRIH), 648–670 (FKCN…QRIH), 676–698 (YKCN…QRTH), 704–726 (YKCN…QRIH), and 732–754 (YACR…QRVH).

This sequence belongs to the krueppel C2H2-type zinc-finger protein family.

The protein localises to the nucleus. In terms of biological role, may be involved in transcriptional regulation. This is Zinc finger protein 287 from Homo sapiens (Human).